A 967-amino-acid chain; its full sequence is Vacuolar membrane protease (967 aa).

The Cytoplasmic portion of the chain corresponds to methionine 1–proline 16. The chain crosses the membrane as a helical span at residues tryptophan 17–valine 37. Over histidine 38–threonine 387 the chain is Vacuolar. Residues asparagine 53 and asparagine 119 are each glycosylated (N-linked (GlcNAc...) asparagine). 2 residues coordinate Zn(2+): histidine 171 and aspartate 183. The active-site Proton acceptor is the glutamate 217. Positions 218, 243, and 316 each coordinate Zn(2+). A helical membrane pass occupies residues leucine 388–isoleucine 408. Over alanine 409–glycine 441 the chain is Cytoplasmic. The chain crosses the membrane as a helical span at residues phenylalanine 442–leucine 462. Over valine 463–histidine 472 the chain is Vacuolar. A helical transmembrane segment spans residues serine 473 to valine 493. Residues serine 494–arginine 507 lie on the Cytoplasmic side of the membrane. A helical transmembrane segment spans residues valine 508–tyrosine 528. The Vacuolar portion of the chain corresponds to glutamate 529 to tyrosine 532. A helical membrane pass occupies residues glycine 533–isoleucine 553. Residues serine 554–tryptophan 663 are Cytoplasmic-facing. The interval serine 579–glutamate 612 is disordered. The segment covering glutamate 591–threonine 606 has biased composition (acidic residues). Residues valine 664–leucine 684 form a helical membrane-spanning segment. The Vacuolar segment spans residues leucine 685–leucine 700. A helical transmembrane segment spans residues phenylalanine 701–isoleucine 721. Residues histidine 722–histidine 727 lie on the Cytoplasmic side of the membrane. The helical transmembrane segment at isoleucine 728–proline 748 threads the bilayer. The Vacuolar segment spans residues phenylalanine 749 to isoleucine 967. N-linked (GlcNAc...) asparagine glycans are attached at residues asparagine 795 and asparagine 832.

This sequence belongs to the peptidase M28 family. The cofactor is Zn(2+).

It is found in the vacuole membrane. Functionally, may be involved in vacuolar sorting and osmoregulation. In Neosartorya fischeri (strain ATCC 1020 / DSM 3700 / CBS 544.65 / FGSC A1164 / JCM 1740 / NRRL 181 / WB 181) (Aspergillus fischerianus), this protein is Vacuolar membrane protease.